We begin with the raw amino-acid sequence, 374 residues long: Pectate lyase 1 (374 aa).

Residues 1–22 form the signal peptide; that stretch reads MKYLLPSAAAGLLLLAAQPTMA. Cysteines 93 and 176 form a disulfide. Ca(2+) is bound by residues aspartate 150, aspartate 152, glutamate 187, and aspartate 191. The active site involves arginine 239. Cysteine 350 and cysteine 373 form a disulfide bridge.

Belongs to the polysaccharide lyase 1 family. PLADES subfamily. Requires Ca(2+) as cofactor.

The protein localises to the secreted. It catalyses the reaction Eliminative cleavage of (1-&gt;4)-alpha-D-galacturonan to give oligosaccharides with 4-deoxy-alpha-D-galact-4-enuronosyl groups at their non-reducing ends.. It functions in the pathway glycan metabolism; pectin degradation; 2-dehydro-3-deoxy-D-gluconate from pectin: step 2/5. In terms of biological role, involved in maceration and soft-rotting of plant tissue. This Pectobacterium atrosepticum (strain SCRI 1043 / ATCC BAA-672) (Erwinia carotovora subsp. atroseptica) protein is Pectate lyase 1 (pel1).